The sequence spans 461 residues: Deoxyguanosinetriphosphate triphosphohydrolase-like protein (461 aa).

The segment at Glu22–Asp41 is disordered. A compositionally biased stretch (basic and acidic residues) spans Phe24 to Asp41. The HD domain occupies Arg72–Gly285.

It belongs to the dGTPase family. Type 2 subfamily.

The polypeptide is Deoxyguanosinetriphosphate triphosphohydrolase-like protein (Haemophilus influenzae (strain PittEE)).